We begin with the raw amino-acid sequence, 396 residues long: Cathepsin D (396 aa).

The signal sequence occupies residues 1–18 (MKMLLLCVFSALALTNDA). A propeptide spans 19–61 (LVRIPLKKFRSIRRQLTDSGKRAEELLADHHSLKYNLSFPASN) (activation peptide). The Peptidase A1 domain occupies 76-393 (YYGEIGLGTP…DRDANRVGFA (318 aa)). Residue aspartate 94 is part of the active site. Residues cysteine 107 and cysteine 114 are joined by a disulfide bond. N-linked (GlcNAc...) asparagine glycans are attached at residues asparagine 131 and asparagine 249. Residues cysteine 272 and cysteine 276 are joined by a disulfide bond. Aspartate 281 is a catalytic residue. Cysteine 315 and cysteine 352 form a disulfide bridge.

This sequence belongs to the peptidase A1 family. As to quaternary structure, monomer.

It localises to the lysosome. The enzyme catalyses Specificity similar to, but narrower than, that of pepsin A. Does not cleave the 4-Gln-|-His-5 bond in B chain of insulin.. With respect to regulation, inhibited by pepstatin. Acid protease active in intracellular protein breakdown. This is Cathepsin D (ctsd) from Chionodraco hamatus (Antarctic teleost icefish).